Here is a 249-residue protein sequence, read N- to C-terminus: Cis-4-hydroxycyclohexanecarboxylate dehydrogenase (249 aa).

Residues aspartate 38, aspartate 63, valine 64, asparagine 90, tyrosine 156, lysine 160, alanine 189, and threonine 191 each contribute to the NAD(+) site. Tyrosine 156 (proton acceptor) is an active-site residue.

This sequence belongs to the short-chain dehydrogenases/reductases (SDR) family. As to quaternary structure, homotetramer.

The catalysed reaction is cis-4-hydroxycyclohexane-1-carboxylate + NAD(+) = 4-oxocyclohexane-1-carboxylate + NADH + H(+). In terms of biological role, dehydrogenase involved in a cyclohexanecarboxylate (CHCA) degradation pathway. Catalyzes the NAD(+)-dependent dehydrogenation of cis-4-hydroxycyclohexanecarboxylate (cis-4-hydroxyCHCA) to form 4-oxocyclohexanecarboxylate (4-oxoCHCA). Is highly specific for the cis-4-hydroxy derivative and shows only weak activity with trans-4-hydroxyCHCA. Cannot use NADP(+). The sequence is that of Cis-4-hydroxycyclohexanecarboxylate dehydrogenase from Sinomonas cyclohexanicum (Corynebacterium cyclohexanicum).